Here is a 135-residue protein sequence, read N- to C-terminus: Protein cornichon homolog 1 (135 aa).

3 consecutive transmembrane segments (helical) span residues 2–22 (VFVW…VIYQ), 51–71 (FVLQ…AMFL), and 111–131 (IVGL…TVLL).

This sequence belongs to the cornichon family. Interacts with HKT1;3.

It is found in the endoplasmic reticulum membrane. It localises to the golgi apparatus membrane. Functionally, acts as a cargo receptor necessary for the transportation of the cation transporter HKT1;3 and possibly other secretory proteins from the endoplasmic reticulum (ER) in COPII-coated vesicles targeted to the Golgi apparatus. The polypeptide is Protein cornichon homolog 1 (Oryza sativa subsp. japonica (Rice)).